Here is a 102-residue protein sequence, read N- to C-terminus: Large ribosomal subunit protein bL21 (102 aa).

Belongs to the bacterial ribosomal protein bL21 family. As to quaternary structure, part of the 50S ribosomal subunit. Contacts protein L20.

Its function is as follows. This protein binds to 23S rRNA in the presence of protein L20. In Geobacillus sp. (strain WCH70), this protein is Large ribosomal subunit protein bL21.